A 550-amino-acid chain; its full sequence is CCR4-NOT transcription complex subunit 6-like-B (550 aa).

Residues 1–148 are required for interaction with cnot1, cnot3 and cnot7; it reads MPKEKYDPPD…LYQEPDGMRK (148 aa). 4 LRR repeats span residues 52–73, 75–96, 98–120, and 121–143; these read HLTVLHLSDNNLSRIPPDIAKL, NLVYLDLSSNKLRSLPAELGNV, SLRELLLNNNLLRVLPFELGRLF, and RLQTLGLKGNPLSQDILGLYQEP. Residues 153-550 form a nuclease domain region; it reads MLDNLSVHPE…INGVHLPSRR (398 aa). E235 contributes to the Mg(2+) binding site. Substrate is bound by residues E235, E271, H355, and P360. Position 405 (D405) interacts with Mg(2+). D405 (proton donor/acceptor) is an active-site residue. Substrate contacts are provided by N407, N474, and F479.

The protein belongs to the CCR4/nocturin family. Component of the CCR4-NOT complex. It depends on Mg(2+) as a cofactor.

It is found in the cytoplasm. Its subcellular location is the nucleus. The catalysed reaction is Exonucleolytic cleavage of poly(A) to 5'-AMP.. Functionally, poly(A) nuclease with 3'-5' RNase activity. Catalytic component of the CCR4-NOT complex which is one of the major cellular mRNA deadenylases and is linked to various cellular processes including bulk mRNA degradation, miRNA-mediated repression, translational repression during translational initiation and general transcription regulation. Additional complex functions may be a consequence of its influence on mRNA expression. The sequence is that of CCR4-NOT transcription complex subunit 6-like-B (cnot6l-b) from Xenopus laevis (African clawed frog).